Here is a 397-residue protein sequence, read N- to C-terminus: Tryptophan synthase beta chain (397 aa).

Lys-87 carries the N6-(pyridoxal phosphate)lysine modification.

The protein belongs to the TrpB family. In terms of assembly, tetramer of two alpha and two beta chains. The cofactor is pyridoxal 5'-phosphate.

The enzyme catalyses (1S,2R)-1-C-(indol-3-yl)glycerol 3-phosphate + L-serine = D-glyceraldehyde 3-phosphate + L-tryptophan + H2O. It participates in amino-acid biosynthesis; L-tryptophan biosynthesis; L-tryptophan from chorismate: step 5/5. The beta subunit is responsible for the synthesis of L-tryptophan from indole and L-serine. This is Tryptophan synthase beta chain from Escherichia coli O157:H7.